Here is a 737-residue protein sequence, read N- to C-terminus: Phosphoribosylformylglycinamidine synthase subunit PurL (737 aa).

H50 is a catalytic residue. The ATP site is built by Y53 and K92. E94 is a binding site for Mg(2+). Substrate is bound by residues 95 to 98 (SHNH) and R117. The active-site Proton acceptor is H96. D118 contacts Mg(2+). A substrate-binding site is contributed by Q241. A Mg(2+)-binding site is contributed by D269. Position 313-315 (313-315 (ESQ)) interacts with substrate. Residues D495 and G532 each contribute to the ATP site. Position 533 (N533) interacts with Mg(2+). Position 535 (S535) interacts with substrate.

It belongs to the FGAMS family. Monomer. Part of the FGAM synthase complex composed of 1 PurL, 1 PurQ and 2 PurS subunits.

It localises to the cytoplasm. The enzyme catalyses N(2)-formyl-N(1)-(5-phospho-beta-D-ribosyl)glycinamide + L-glutamine + ATP + H2O = 2-formamido-N(1)-(5-O-phospho-beta-D-ribosyl)acetamidine + L-glutamate + ADP + phosphate + H(+). It participates in purine metabolism; IMP biosynthesis via de novo pathway; 5-amino-1-(5-phospho-D-ribosyl)imidazole from N(2)-formyl-N(1)-(5-phospho-D-ribosyl)glycinamide: step 1/2. Functionally, part of the phosphoribosylformylglycinamidine synthase complex involved in the purines biosynthetic pathway. Catalyzes the ATP-dependent conversion of formylglycinamide ribonucleotide (FGAR) and glutamine to yield formylglycinamidine ribonucleotide (FGAM) and glutamate. The FGAM synthase complex is composed of three subunits. PurQ produces an ammonia molecule by converting glutamine to glutamate. PurL transfers the ammonia molecule to FGAR to form FGAM in an ATP-dependent manner. PurS interacts with PurQ and PurL and is thought to assist in the transfer of the ammonia molecule from PurQ to PurL. This chain is Phosphoribosylformylglycinamidine synthase subunit PurL, found in Bartonella bacilliformis (strain ATCC 35685 / KC583 / Herrer 020/F12,63).